Here is a 394-residue protein sequence, read N- to C-terminus: Glycogen synthase kinase 1 (394 aa).

A Protein kinase domain is found at 35–318; the sequence is YTQCKIVGNG…AIDAMVHPFF (284 aa). ATP is bound by residues 41 to 49 and Lys64; that span reads VGNGSFGVV.

It belongs to the protein kinase superfamily. CMGC Ser/Thr protein kinase family. GSK-3 subfamily.

The protein resides in the cytoplasm. The enzyme catalyses L-seryl-[protein] + ATP = O-phospho-L-seryl-[protein] + ADP + H(+). In terms of biological role, protein kinase that acts downstream of the MPS1 MAPK cascade as a highly conservative signal modulator that dictates growth, conidiation and pathogenicity. Phosphorylates HAT1 at 'Ser-8' to block its translocation from the nucleus to the cytoplasm where HAT1 positively regulates appressorium development and pathogenicity. This chain is Glycogen synthase kinase 1, found in Pyricularia oryzae (Rice blast fungus).